A 181-amino-acid chain; its full sequence is MSPMLQIAAEEMENPLIPPIPELVIGLIAFVIVFGFLAKKLLPNINKVLEERREAIEGGIEKAEAAQTEAQSVLEQYKAQLAEARHEGREEAQEQGATLIAEMRAEGQRQREEIIAAGHAQIQADRKAAASALRQDVGKLATELAGKLVGESLEDHARQSRVIDRFLDELDDKATTAEATR.

Residues 16 to 36 (LIPPIPELVIGLIAFVIVFGF) form a helical membrane-spanning segment.

The protein belongs to the ATPase B chain family. In terms of assembly, F-type ATPases have 2 components, F(1) - the catalytic core - and F(0) - the membrane proton channel. F(1) has five subunits: alpha(3), beta(3), gamma(1), delta(1), epsilon(1). F(0) has three main subunits: a(1), b(2) and c(10-14). The alpha and beta chains form an alternating ring which encloses part of the gamma chain. F(1) is attached to F(0) by a central stalk formed by the gamma and epsilon chains, while a peripheral stalk is formed by the delta and b chains.

Its subcellular location is the cell membrane. F(1)F(0) ATP synthase produces ATP from ADP in the presence of a proton or sodium gradient. F-type ATPases consist of two structural domains, F(1) containing the extramembraneous catalytic core and F(0) containing the membrane proton channel, linked together by a central stalk and a peripheral stalk. During catalysis, ATP synthesis in the catalytic domain of F(1) is coupled via a rotary mechanism of the central stalk subunits to proton translocation. In terms of biological role, component of the F(0) channel, it forms part of the peripheral stalk, linking F(1) to F(0). The protein is ATP synthase subunit b of Streptomyces lividans.